We begin with the raw amino-acid sequence, 394 residues long: Ribulose bisphosphate carboxylase large chain (394 aa).

Lysine 5 carries the N6,N6,N6-trimethyllysine modification. The substrate site is built by asparagine 114 and threonine 164. Residue lysine 166 is the Proton acceptor of the active site. Lysine 168 serves as a coordination point for substrate. Mg(2+) is bound by residues lysine 192, aspartate 194, and glutamate 195. The residue at position 192 (lysine 192) is an N6-carboxylysine. The active-site Proton acceptor is the histidine 285. Substrate contacts are provided by arginine 286, histidine 318, and serine 370.

The protein belongs to the RuBisCO large chain family. Type I subfamily. In terms of assembly, heterohexadecamer of 8 large chains and 8 small chains; disulfide-linked. The disulfide link is formed within the large subunit homodimers. The cofactor is Mg(2+). Post-translationally, the disulfide bond which can form in the large chain dimeric partners within the hexadecamer appears to be associated with oxidative stress and protein turnover.

The protein localises to the plastid. It is found in the chloroplast. It carries out the reaction 2 (2R)-3-phosphoglycerate + 2 H(+) = D-ribulose 1,5-bisphosphate + CO2 + H2O. It catalyses the reaction D-ribulose 1,5-bisphosphate + O2 = 2-phosphoglycolate + (2R)-3-phosphoglycerate + 2 H(+). RuBisCO catalyzes two reactions: the carboxylation of D-ribulose 1,5-bisphosphate, the primary event in carbon dioxide fixation, as well as the oxidative fragmentation of the pentose substrate in the photorespiration process. Both reactions occur simultaneously and in competition at the same active site. The protein is Ribulose bisphosphate carboxylase large chain (rbcL) of Nelumbo lutea (American lotus).